A 502-amino-acid polypeptide reads, in one-letter code: Interleukin-17 receptor B (502 aa).

The N-terminal stretch at 1–17 (MSLVLLSLAALCRSAVP) is a signal peptide. At 18 to 292 (REPTVQCGSE…NKSKPGGWLP (275 aa)) the chain is on the extracellular side. Asparagine 67, asparagine 103, asparagine 156, asparagine 183, asparagine 197, and asparagine 283 each carry an N-linked (GlcNAc...) asparagine glycan. The chain crosses the membrane as a helical span at residues 293–313 (LLLLSLLVATWVLVAGIYLMW). At 314-502 (RHERIKKTSF…QACHDGCCSL (189 aa)) the chain is on the cytoplasmic side. The SEFIR domain maps to 331 to 477 (PIKVLVVYPS…LMKDATAFCA (147 aa)).

As to quaternary structure, interacts with DAZAP2. Interacts with TRAF3IP2. In terms of tissue distribution, expressed in several endocrine tissues, mostly in fetal and adult liver, kidney, pancreas, testis, colon, brain and small intestine; not detected in peripheral blood leukocytes, lymphoid organs, and most cell lines.

Its subcellular location is the cell membrane. The protein resides in the secreted. In terms of biological role, receptor for the pro-inflammatory cytokines IL17B and IL17E. May play a role in controlling the growth and/or differentiation of hematopoietic cells. This Homo sapiens (Human) protein is Interleukin-17 receptor B (IL17RB).